A 24-amino-acid polypeptide reads, in one-letter code: Ascaphin-4 (24 aa).

In terms of tissue distribution, expressed by the skin glands.

The protein resides in the secreted. Its function is as follows. Antimicrobial peptide that shows higher potency against Gram-negative bacteria than against Gram-positive bacteria. Has a very week hemolytic activity. This is Ascaphin-4 from Ascaphus truei (Coastal tailed frog).